Consider the following 239-residue polypeptide: Sensory rhodopsin-2 (239 aa).

Topologically, residues Met-1–Gly-3 are extracellular. The helical transmembrane segment at Leu-4 to Ala-25 threads the bilayer. At Gly-26–Glu-33 the chain is on the cytoplasmic side. The chain crosses the membrane as a helical span at residues Arg-34–Ala-55. Residues Leu-56–Phe-69 lie on the Extracellular side of the membrane. Residues Ala-70–Ala-91 form a helical membrane-spanning segment. At Gly-92–Asp-94 the chain is on the cytoplasmic side. A helical transmembrane segment spans residues Ser-95–Met-117. The Extracellular segment spans residues Val-118–Ile-121. A helical transmembrane segment spans residues Glu-122–Ala-149. The Cytoplasmic portion of the chain corresponds to Ser-150–Ser-153. The chain crosses the membrane as a helical span at residues Ser-154 to Gly-181. Residues Pro-182–Thr-189 are Extracellular-facing. A helical membrane pass occupies residues Pro-190–Glu-222. Lys-205 is modified (N6-(retinylidene)lysine). At His-223–Asp-239 the chain is on the cytoplasmic side.

This sequence belongs to the archaeal/bacterial/fungal opsin family. In terms of assembly, homodimer. Interacts with HTR-II.

The protein resides in the cell membrane. Its function is as follows. Photophobic photoreceptor responsible for the negative phototaxis. Activates the sensory rhodopsin II transducer (HTR-II) in response to blue light. This is Sensory rhodopsin-2 (sop2) from Natronomonas pharaonis (Natronobacterium pharaonis).